Consider the following 1201-residue polypeptide: ATP-dependent helicase/deoxyribonuclease subunit B (1201 aa).

The protein belongs to the helicase family. AddB/RexB type 2 subfamily. Heterodimer of AddA and RexB. The cofactor is Mg(2+).

The heterodimer acts as both an ATP-dependent DNA helicase and an ATP-dependent, dual-direction single-stranded exonuclease. Recognizes the chi site generating a DNA molecule suitable for the initiation of homologous recombination. This subunit has 5' -&gt; 3' nuclease activity but not helicase activity. This Levilactobacillus brevis (strain ATCC 367 / BCRC 12310 / CIP 105137 / JCM 1170 / LMG 11437 / NCIMB 947 / NCTC 947) (Lactobacillus brevis) protein is ATP-dependent helicase/deoxyribonuclease subunit B.